The primary structure comprises 595 residues: Probable L-gulonolactone oxidase 1 (595 aa).

Positions 1 to 18 (MAFWLSLIFFCFCTFASS) are cleaved as a signal peptide. The FAD-binding PCMH-type domain occupies 47–229 (SICEAAKVEY…SQVTFQLQPM (183 aa)).

It belongs to the oxygen-dependent FAD-linked oxidoreductase family. FAD is required as a cofactor.

It carries out the reaction L-gulono-1,4-lactone + O2 = L-ascorbate + H2O2 + H(+). It functions in the pathway cofactor biosynthesis; L-ascorbate biosynthesis. Its function is as follows. May be involved in the biosynthesis of ascorbic acid. The polypeptide is Probable L-gulonolactone oxidase 1 (Arabidopsis thaliana (Mouse-ear cress)).